We begin with the raw amino-acid sequence, 266 residues long: Chymotrypsin-like elastase family member 1 (266 aa).

The signal sequence occupies residues 1–16 (MLRFLVLATLVLYGHS). The propeptide at 17-26 (TRDFPETNAR) is activation peptide. A Peptidase S1 domain is found at 27–264 (VVGGTEARKN…YISWINNVIA (238 aa)). Cysteines 56 and 72 form a disulfide. Residue H71 is the Charge relay system of the active site. E85, N87, Q90, and E95 together coordinate Ca(2+). N87 carries an N-linked (GlcNAc...) asparagine glycan. The active-site Charge relay system is D119. 3 cysteine pairs are disulfide-bonded: C153–C220, C184–C200, and C210–C240. S214 acts as the Charge relay system in catalysis. An N-linked (GlcNAc...) asparagine glycan is attached at N241.

Belongs to the peptidase S1 family. Elastase subfamily. Requires Ca(2+) as cofactor.

It localises to the secreted. The enzyme catalyses Hydrolysis of proteins, including elastin. Preferential cleavage: Ala-|-Xaa.. Its function is as follows. Serine proteases that hydrolyze many proteins in addition to elastin. This Felis catus (Cat) protein is Chymotrypsin-like elastase family member 1 (CELA1).